The primary structure comprises 540 residues: Probable metabolite transport protein YFL040W (540 aa).

The Cytoplasmic portion of the chain corresponds to 1-29 (MTAMKAIVWRLPKMPKIKITKTYEVTKIT). A helical membrane pass occupies residues 30 to 50 (AILTLVGFIMGLEVPSLATFL). The Extracellular segment spans residues 51 to 67 (TNKTFNEYFKYPTPLQQ). N-linked (GlcNAc...) asparagine glycosylation is present at Asn52. A helical membrane pass occupies residues 68 to 88 (GLLMGSTPLGGIMGCFICCIM). Over 89-101 (NDRFSRIYQFQSG) the chain is Cytoplasmic. The helical transmembrane segment at 102-122 (IIIWNIVTLLNFCIWDILGLL) threads the bilayer. Over 123–126 (ICRM) the chain is Extracellular. Residues 127–147 (IKGMILGNFSILVASYANEVI) form a helical membrane-spanning segment. Over 148–158 (PRGKRGSTMSY) the chain is Cytoplasmic. The helical transmembrane segment at 159–179 (IQLCLTIGILVMHYLCIALSL) threads the bilayer. Topologically, residues 180-187 (WDSHFAFR) are extracellular. A helical membrane pass occupies residues 188–208 (IAWCIGIIPGLLFWMASYALP). The Cytoplasmic portion of the chain corresponds to 209 to 275 (ESYHWLVLHG…KKLPRGSFKP (67 aa)). The chain crosses the membrane as a helical span at residues 276–296 (LILGMTLQLLVQFSGINIILG). The Extracellular portion of the chain corresponds to 297–313 (YITYICEIVGLEGNVKL). A helical transmembrane segment spans residues 314-334 (FTSSIPYFINMVLSLLPITFI). Over 335-341 (DYTSRKL) the chain is Cytoplasmic. The helical transmembrane segment at 342–362 (ITLLGGFPISGLLITIGALFV) threads the bilayer. The Extracellular portion of the chain corresponds to 363–385 (KYGQDTKPIDGNRSLVWSIGENP). Asn374 is a glycosylation site (N-linked (GlcNAc...) asparagine). Residues 386 to 406 (FVGGWILTLCFLIVGIFAMSL) traverse the membrane as a helical segment. Over 407 to 428 (SSIPWVYTNEMLPSRVKVKGFA) the chain is Cytoplasmic. Residues 429-449 (ICVTFGWLGNFILTFLCPVMI) traverse the membrane as a helical segment. Residues 450–455 (ERLKGT) lie on the Extracellular side of the membrane. A helical membrane pass occupies residues 456–476 (TFIIFGSLTFLISLSVLIWFP). Residues 477–540 (ETKGMSIEDI…KLKSDEEMII (64 aa)) lie on the Cytoplasmic side of the membrane. The disordered stretch occupies residues 499–540 (NLHGEKGIKTPDSNSNGGSTRSSQEGQLHKPIKLKSDEEMII). Polar residues predominate over residues 509–524 (PDSNSNGGSTRSSQEG).

This sequence belongs to the major facilitator superfamily. Sugar transporter (TC 2.A.1.1) family.

The protein resides in the membrane. The protein is Probable metabolite transport protein YFL040W of Saccharomyces cerevisiae (strain ATCC 204508 / S288c) (Baker's yeast).